We begin with the raw amino-acid sequence, 116 residues long: NADH-ubiquinone oxidoreductase chain 3 (116 aa).

3 helical membrane-spanning segments follow: residues 3-23 (LITT…TVSF), 56-76 (FFLI…LLPL), and 87-107 (LTLV…IYEW).

Belongs to the complex I subunit 3 family.

It localises to the mitochondrion membrane. It catalyses the reaction a ubiquinone + NADH + 5 H(+)(in) = a ubiquinol + NAD(+) + 4 H(+)(out). Core subunit of the mitochondrial membrane respiratory chain NADH dehydrogenase (Complex I) that is believed to belong to the minimal assembly required for catalysis. Complex I functions in the transfer of electrons from NADH to the respiratory chain. The immediate electron acceptor for the enzyme is believed to be ubiquinone. This Oncorhynchus kisutch (Coho salmon) protein is NADH-ubiquinone oxidoreductase chain 3 (MT-ND3).